The chain runs to 215 residues: MSSAVIFVESATPGTLTEFKDLLAKQLLEVRETWSLEFRTYRTLVKDFPSREKLLYSLTFPHHDKKTVLIRNSLAWVLGTAEIPDNLQTCSTGLSESIDQLLASKLSNMWAQRQVIRGDAGQTLLITGDVTVRIINLFAATGFKGLLIELDNLQSATSLANITDLLNEMKVKVFKVASAPGLKSEDVEVVDSSSTMESGNEALFTLAKQYIEVLE.

The protein belongs to the Mediator complex subunit 20 family. Component of the Mediator complex.

Its subcellular location is the nucleus. Its function is as follows. Component of the Mediator complex, a coactivator involved in the regulated transcription of nearly all RNA polymerase II-dependent genes. Mediator functions as a bridge to convey information from gene-specific regulatory proteins to the basal RNA polymerase II transcription machinery. Mediator is recruited to promoters by direct interactions with regulatory proteins and serves as a scaffold for the assembly of a functional preinitiation complex with RNA polymerase II and the general transcription factors. The protein is Mediator of RNA polymerase II transcription subunit 20 (SRB2) of Candida glabrata (strain ATCC 2001 / BCRC 20586 / JCM 3761 / NBRC 0622 / NRRL Y-65 / CBS 138) (Yeast).